Consider the following 80-residue polypeptide: Large ribosomal subunit protein uL24 (80 aa).

This sequence belongs to the universal ribosomal protein uL24 family. In terms of assembly, part of the 50S ribosomal subunit.

Its function is as follows. One of two assembly initiator proteins, it binds directly to the 5'-end of the 23S rRNA, where it nucleates assembly of the 50S subunit. Functionally, one of the proteins that surrounds the polypeptide exit tunnel on the outside of the subunit. This chain is Large ribosomal subunit protein uL24, found in Chlorobium phaeovibrioides (strain DSM 265 / 1930) (Prosthecochloris vibrioformis (strain DSM 265)).